The sequence spans 334 residues: Protein-methionine-sulfoxide reductase catalytic subunit MsrP (334 aa).

A signal peptide (tat-type signal) is located at residues 1 to 44; that stretch reads MKKNQFLKESDVTAESVFFMKRRQVLKALGISAAAFSLPHAAHA. Mo-molybdopterin contacts are provided by residues Asn88, 91-92, Cys146, Thr181, Asn233, Arg238, and 249-251; these read YE and GIK.

Belongs to the MsrP family. Heterodimer of a catalytic subunit (MsrP) and a heme-binding subunit (MsrQ). The cofactor is Mo-molybdopterin. Post-translationally, predicted to be exported by the Tat system. The position of the signal peptide cleavage has not been experimentally proven.

The protein localises to the periplasm. The enzyme catalyses L-methionyl-[protein] + a quinone + H2O = L-methionyl-(S)-S-oxide-[protein] + a quinol. It carries out the reaction L-methionyl-[protein] + a quinone + H2O = L-methionyl-(R)-S-oxide-[protein] + a quinol. In terms of biological role, part of the MsrPQ system that repairs oxidized periplasmic proteins containing methionine sulfoxide residues (Met-O), using respiratory chain electrons. Thus protects these proteins from oxidative-stress damage caused by reactive species of oxygen and chlorine generated by the host defense mechanisms. MsrPQ is essential for the maintenance of envelope integrity under bleach stress, rescuing a wide series of structurally unrelated periplasmic proteins from methionine oxidation, including the primary periplasmic chaperone SurA and the lipoprotein Pal. The catalytic subunit MsrP is non-stereospecific, being able to reduce both (R-) and (S-) diastereoisomers of methionine sulfoxide. The protein is Protein-methionine-sulfoxide reductase catalytic subunit MsrP of Escherichia coli O7:K1 (strain IAI39 / ExPEC).